The following is a 386-amino-acid chain: Succinate--CoA ligase [ADP-forming] subunit beta (386 aa).

The region spanning 9 to 244 (KEILKQYGVK…LDEEDEKEIE (236 aa)) is the ATP-grasp domain. ATP-binding positions include K46, 53 to 55 (GRG), E99, C102, and E107. Mg(2+) contacts are provided by N199 and D213. Residues N264 and 321–323 (GIM) each bind substrate.

The protein belongs to the succinate/malate CoA ligase beta subunit family. In terms of assembly, heterotetramer of two alpha and two beta subunits. The cofactor is Mg(2+).

The catalysed reaction is succinate + ATP + CoA = succinyl-CoA + ADP + phosphate. The enzyme catalyses GTP + succinate + CoA = succinyl-CoA + GDP + phosphate. It functions in the pathway carbohydrate metabolism; tricarboxylic acid cycle; succinate from succinyl-CoA (ligase route): step 1/1. Succinyl-CoA synthetase functions in the citric acid cycle (TCA), coupling the hydrolysis of succinyl-CoA to the synthesis of either ATP or GTP and thus represents the only step of substrate-level phosphorylation in the TCA. The beta subunit provides nucleotide specificity of the enzyme and binds the substrate succinate, while the binding sites for coenzyme A and phosphate are found in the alpha subunit. The polypeptide is Succinate--CoA ligase [ADP-forming] subunit beta (Brevibacillus brevis (strain 47 / JCM 6285 / NBRC 100599)).